Here is a 317-residue protein sequence, read N- to C-terminus: L-lactate dehydrogenase 2 (317 aa).

NAD(+) contacts are provided by residues V16, D37, K42, Y68, and 82–83; that span reads GA. Positions 85 and 91 each coordinate substrate. NAD(+)-binding positions include T104, 121-123, and T146; that span reads ASN. 123 to 126 provides a ligand contact to substrate; it reads NPVD. 151–154 provides a ligand contact to substrate; it reads DTTR. Beta-D-fructose 1,6-bisphosphate-binding residues include R156 and H171. H178 serves as the catalytic Proton acceptor. The residue at position 223 (Y223) is a Phosphotyrosine. Residue T232 coordinates substrate.

The protein belongs to the LDH/MDH superfamily. LDH family. As to quaternary structure, homotetramer.

The protein localises to the cytoplasm. It carries out the reaction (S)-lactate + NAD(+) = pyruvate + NADH + H(+). It functions in the pathway fermentation; pyruvate fermentation to lactate; (S)-lactate from pyruvate: step 1/1. With respect to regulation, allosterically activated by fructose 1,6-bisphosphate (FBP). In terms of biological role, catalyzes the conversion of lactate to pyruvate. This Enterococcus faecalis (strain ATCC 700802 / V583) protein is L-lactate dehydrogenase 2.